A 503-amino-acid chain; its full sequence is Transforming protein rel polyprotein (503 aa).

In terms of domain architecture, RHD spans 16 to 305 (PYIEIFEQPR…GNKAKRQRST (290 aa)). Serine 275 carries the phosphoserine; by host PKA modification. Disordered stretches follow at residues 286 to 306 (RYLPDEEDPSGNKAKRQRSTL) and 318 to 342 (AVTERPKAAPIPTVNPEGKLKKEPN). Residues 298 to 303 (KAKRQR) carry the Nuclear localization signal motif.

The protein resides in the host cytoplasm. This transforming protein appears to have a protein-kinase activity. The sequence is that of Transforming protein rel polyprotein (V-REL) from Galliformes.